A 132-amino-acid polypeptide reads, in one-letter code: Small ribosomal subunit protein uS17c (132 aa).

Residues 1–11 (MLLLSSPFVSV) are compositionally biased toward low complexity. Disordered stretches follow at residues 1–23 (MLLL…SHGA) and 104–132 (PLPP…SSRE). Residues 1-31 (MLLLSSPFVSVSPPPPPLSSHGARPALRIEA) constitute a chloroplast transit peptide. Acidic residues predominate over residues 122–132 (SDDDQEPSSRE).

The protein belongs to the universal ribosomal protein uS17 family. Part of the 30S ribosomal subunit.

It is found in the plastid. The protein resides in the chloroplast. In terms of biological role, one of the primary rRNA binding proteins, it binds specifically to the 5'-end of 16S ribosomal RNA. Its function is as follows. In the hcf60 mutation the Activator tag is inserted 17 base pars upstream of the initiation codon. This mutation is seedling lethal, due to plastid ribosome insufficiency. However under non-light stressed conditions photosynthesis and oxygen evolution can occur. The sequence is that of Small ribosomal subunit protein uS17c (RPS17) from Zea mays (Maize).